Consider the following 233-residue polypeptide: MGFSFKAFHVDDFGCGMPVSTDAVLLGAWANLDGADAVLDLGAGSGLLALMAAQRCKAPITAIEIDPVAASACRSNFSASPWPDRINLIEADATDAEALAGKVFTHILCNPPYFETGPLSEKPGRAQARHTGSLGFLALCKLITTHLSTEGIASLVLPVESEQAFRQALTHLGLGIRQRVEVSTVEGKAPRRLLLAVSQGEDSYQHEHLAIRDVHGCYTEAMTALTRDFYLKL.

This sequence belongs to the methyltransferase superfamily. tRNA (adenine-N(6)-)-methyltransferase family.

The protein localises to the cytoplasm. The enzyme catalyses adenosine(37) in tRNA1(Val) + S-adenosyl-L-methionine = N(6)-methyladenosine(37) in tRNA1(Val) + S-adenosyl-L-homocysteine + H(+). Specifically methylates the adenine in position 37 of tRNA(1)(Val) (anticodon cmo5UAC). The chain is tRNA1(Val) (adenine(37)-N6)-methyltransferase from Shewanella amazonensis (strain ATCC BAA-1098 / SB2B).